The sequence spans 1470 residues: ABC transporter G family member 48 (1470 aa).

Residues 1–47 form a disordered region; it reads MAAAPSASGRRSMSWGSSISQSFRQAEADDPFGRAASQQGHDDDEEN. Positions 9–24 are enriched in polar residues; sequence GRRSMSWGSSISQSFR. The 274-residue stretch at 172-445 folds into the ABC transporter 1 domain; that stretch reads GLIGRFGSSN…FENAGFRCPE (274 aa). An ATP-binding site is contributed by 205 to 212; it reads GPPSSGKS. Residues 523–736 form the ABC transmembrane type-2 1 domain; that stretch reads ESLRAVMSRE…SQQAISINEF (214 aa). A run of 6 helical transmembrane segments spans residues 541-561, 577-597, 629-649, 660-680, 686-706, and 772-792; these read FIYI…MTVF, FLGA…AELQ, VPVS…VMGF, FIAF…LGAI, VANT…GFLI, and FWIS…LYIL. Residues 828 to 852 form a disordered region; that stretch reads QIVHNNGASNTSATSSIPMSGSRST. Low complexity predominate over residues 832 to 843; sequence NNGASNTSATSS. Positions 869-1121 constitute an ABC transporter 2 domain; that stretch reads LCFNHVNYYV…KLVEYFEAVP (253 aa). 914–921 provides a ligand contact to ATP; it reads GVSGAGKT. Residues 1194 to 1408 form the ABC transmembrane type-2 2 domain; the sequence is SQCIANFWKQ…TIYGVVASQF (215 aa). The next 7 helical transmembrane spans lie at 1215–1234, 1249–1271, 1301–1321, 1331–1351, 1359–1379, 1389–1409, and 1439–1459; these read AMRY…VFWQ, LGAT…QPVV, VIYN…MIGY, FMFF…MLVA, ANIL…FLVV, WYYW…SQFG, and FLGY…FIFG.

It belongs to the ABC transporter superfamily. ABCG family. PDR (TC 3.A.1.205) subfamily.

The protein localises to the membrane. Its function is as follows. May be a general defense protein. The sequence is that of ABC transporter G family member 48 from Oryza sativa subsp. japonica (Rice).